Consider the following 115-residue polypeptide: Ribonuclease P protein component (115 aa).

This sequence belongs to the RnpA family. In terms of assembly, consists of a catalytic RNA component (M1 or rnpB) and a protein subunit.

It carries out the reaction Endonucleolytic cleavage of RNA, removing 5'-extranucleotides from tRNA precursor.. Functionally, RNaseP catalyzes the removal of the 5'-leader sequence from pre-tRNA to produce the mature 5'-terminus. It can also cleave other RNA substrates such as 4.5S RNA. The protein component plays an auxiliary but essential role in vivo by binding to the 5'-leader sequence and broadening the substrate specificity of the ribozyme. The polypeptide is Ribonuclease P protein component (Phytoplasma australiense).